Reading from the N-terminus, the 270-residue chain is FKBP-type peptidyl-prolyl cis-trans isomerase FkpA (270 aa).

Positions 1–25 (MKSLFKVTLLATTMAVALHAPITFA) are cleaved as a signal peptide. The region spanning 164–249 (SDTVVVNYKG…VFDVELLDVK (86 aa)) is the PPIase FKBP-type domain.

It belongs to the FKBP-type PPIase family.

It is found in the periplasm. The enzyme catalyses [protein]-peptidylproline (omega=180) = [protein]-peptidylproline (omega=0). Its function is as follows. PPIases accelerate the folding of proteins. It catalyzes the cis-trans isomerization of proline imidic peptide bonds in oligopeptides. The protein is FKBP-type peptidyl-prolyl cis-trans isomerase FkpA (fkpA) of Escherichia coli (strain K12).